A 173-amino-acid polypeptide reads, in one-letter code: Adenine phosphoribosyltransferase (173 aa).

This sequence belongs to the purine/pyrimidine phosphoribosyltransferase family. As to quaternary structure, homodimer.

It localises to the cytoplasm. The catalysed reaction is AMP + diphosphate = 5-phospho-alpha-D-ribose 1-diphosphate + adenine. It participates in purine metabolism; AMP biosynthesis via salvage pathway; AMP from adenine: step 1/1. Catalyzes a salvage reaction resulting in the formation of AMP, that is energically less costly than de novo synthesis. The chain is Adenine phosphoribosyltransferase from Methanococcus vannielii (strain ATCC 35089 / DSM 1224 / JCM 13029 / OCM 148 / SB).